The sequence spans 182 residues: Auxin-responsive protein IAA9 (182 aa).

Residues 1–41 are disordered; that stretch reads MELELGLAPPNSGHLVVDELSSSSSSGGGSGSAPVSASSAG. Residues 3 to 7 carry the EAR-like (transcriptional repression) motif; the sequence is LELGL. Low complexity predominate over residues 32–41; that stretch reads SAPVSASSAG. The PB1 domain maps to 92 to 182; sequence ANYVKVKKEG…RSVKRLKILG (91 aa).

It belongs to the Aux/IAA family. As to quaternary structure, homodimers and heterodimers. As to expression, expressed in etiolated shoots and flowers.

Its subcellular location is the nucleus. In terms of biological role, aux/IAA proteins are short-lived transcriptional factors that function as repressors of early auxin response genes at low auxin concentrations. The sequence is that of Auxin-responsive protein IAA9 (IAA9) from Oryza sativa subsp. japonica (Rice).